The primary structure comprises 456 residues: Phosphomethylpyrimidine synthase (456 aa).

Substrate is bound by residues asparagine 80, methionine 109, tyrosine 139, histidine 175, 195–197, 236–239, and glutamate 275; these read SRG and DSLR. Residue histidine 279 participates in Zn(2+) binding. Position 302 (tyrosine 302) interacts with substrate. Position 343 (histidine 343) interacts with Zn(2+). Cysteine 423, cysteine 426, and cysteine 431 together coordinate [4Fe-4S] cluster.

This sequence belongs to the ThiC family. It depends on [4Fe-4S] cluster as a cofactor.

It catalyses the reaction 5-amino-1-(5-phospho-beta-D-ribosyl)imidazole + S-adenosyl-L-methionine = 4-amino-2-methyl-5-(phosphooxymethyl)pyrimidine + CO + 5'-deoxyadenosine + formate + L-methionine + 3 H(+). It participates in cofactor biosynthesis; thiamine diphosphate biosynthesis. Functionally, catalyzes the synthesis of the hydroxymethylpyrimidine phosphate (HMP-P) moiety of thiamine from aminoimidazole ribotide (AIR) in a radical S-adenosyl-L-methionine (SAM)-dependent reaction. This Prochlorococcus marinus (strain MIT 9301) protein is Phosphomethylpyrimidine synthase.